A 441-amino-acid chain; its full sequence is MQITETLAEGLKREYTITVPASDLEARVNTKLEEARPEVEMKGFRKGKVPMALLKKQFGPKVMGEAMQESVDEAMQGHLDESGDRPALQPEVKMTNEDWKEGDDIVVSMAYEKLPEIPDVDYKAIKLEKLVVTPGDDEVKEALDNLAENAESFATKKGKAADGDQVVFDFVGTVDGEAFEGGSAEDFPLKLGSGQFIPGFEEQLVGVKAKDEKDVEVSFPEDYQAEHLAGKAAVFACTIKEVKKPVPAEVDDELAKKFGAEDLEALKGQISERLGTEYKGAARAVMKRSLLDQLDDVVSFELPPSLVEAEAKQIAHQLWHEENPEVEGHDHPEIETTEEHTSLAARRVKLGLLLAELGQKNDVTVSDAEMTQAIMTQARQYPGQERAFFEFIQQNQQAQQQVRAPLFEDKVVDFIGEMAEVSEKEVSKDDLKAAVDALDEE.

In terms of domain architecture, PPIase FKBP-type spans G163–A248.

The protein belongs to the FKBP-type PPIase family. Tig subfamily.

The protein localises to the cytoplasm. The catalysed reaction is [protein]-peptidylproline (omega=180) = [protein]-peptidylproline (omega=0). Involved in protein export. Acts as a chaperone by maintaining the newly synthesized protein in an open conformation. Functions as a peptidyl-prolyl cis-trans isomerase. The polypeptide is Trigger factor (Jannaschia sp. (strain CCS1)).